Here is a 497-residue protein sequence, read N- to C-terminus: Serine/threonine-protein kinase 3 (497 aa).

Met-1 carries the post-translational modification N-acetylmethionine. A disordered region spans residues 1–20 (MEQPPASKSKLKKLSEDSLT). Ser-15 bears the Phosphoserine mark. The Protein kinase domain maps to 27–278 (FDVLEKLGEG…ATQLLQHPFI (252 aa)). ATP contacts are provided by residues 33 to 41 (LGEGSYGSV) and Lys-56. Thr-117 carries the post-translational modification Phosphothreonine; by PKB/AKT1. Catalysis depends on Asp-146, which acts as the Proton acceptor. Residues Asn-151 and Asp-164 each contribute to the Mg(2+) site. Phosphothreonine; by autocatalysis is present on Thr-180. A coiled-coil region spans residues 287-328 (LRDLIAEAMEIKAKRHEEQQRELEEEEENSDEDELDSHTMVK). Disordered stretches follow at residues 301 to 343 (RHEE…TSTM) and 368 to 394 (NSEE…SPQV). Positions 309 to 321 (LEEEEENSDEDEL) are enriched in acidic residues. Ser-316 carries the phosphoserine modification. The segment covering 326–343 (MVKTSSESVGTMRATSTM) has biased composition (polar residues). Thr-336 is modified (phosphothreonine). Positions 366–387 (VINSEEEEEEEEEEEEDGTMKR) form a coiled coil. Positions 369–382 (SEEEEEEEEEEEED) are enriched in acidic residues. Thr-384 carries the post-translational modification Phosphothreonine. Thr-390 carries the phosphothreonine; by PKB/AKT1 modification. Phosphoserine is present on residues Ser-391 and Ser-450. One can recognise an SARAH domain in the interval 443-490 (FDFLKNLSLEELQMRLKALDPMMEREIEELHQRYSAKRQPILDAMDAK). Residues 448–479 (NLSLEELQMRLKALDPMMEREIEELHQRYSAK) are a coiled coil.

This sequence belongs to the protein kinase superfamily. STE Ser/Thr protein kinase family. STE20 subfamily. In terms of assembly, homodimer; mediated via the coiled-coil region. Interacts with NORE1, which inhibits autoactivation. Interacts with and stabilizes SAV1. Interacts with RAF1, which prevents dimerization and phosphorylation. Interacts with RASSF1. Interacts (via SARAH domain) with isoform 1 of NEK2. Interacts with ESR1 only in the presence of SAV1. Interacts with PKB/AKT1. Forms a tripartite complex with MOBKL1B and STK38. Interacts with RASSF2 (via SARAH domain). Interacts with DLG5 (via PDZ domain 3). Interacts with LATS1; this interaction is inhibited in the presence of DLG5. Interacts with MARK3 in the presence of DLG5. Interacts with RASSF5; this interaction inhibits STK3 autoactivation through heterodimerization. Interacts (when phosphorylated) with SLMAP (via FHA domain); the interaction associates STK3 with the STRIPAK complex. Mg(2+) serves as cofactor. Post-translationally, autophosphorylated on two residues Thr-174 and Thr-180, leading to activation. Phosphorylation at Thr-117 and Thr-390 by PKB/AKT1, leads to inhibition of its: cleavage, kinase activity, autophosphorylation at Thr-180, binding to RASSF1 and nuclear translocation, and increase in its binding to RAF1. Phosphorylated at Ser-15 by PLK1, leading to activation. In terms of processing, proteolytically cleaved by caspase-3 during apoptosis. Proteolytic cleavage results in kinase activation and nuclear translocation of the truncated form (MST1/N). Ubiquitinated by TRIM69; leading to its redistribution to the perinuclear cytoskeleton.

It localises to the cytoplasm. The protein localises to the nucleus. The enzyme catalyses L-seryl-[protein] + ATP = O-phospho-L-seryl-[protein] + ADP + H(+). The catalysed reaction is L-threonyl-[protein] + ATP = O-phospho-L-threonyl-[protein] + ADP + H(+). Its activity is regulated as follows. Inhibited by the C-terminal non-catalytic region. Activated by caspase-cleavage. Full activation also requires homodimerization and autophosphorylation of Thr-180, which are inhibited by the proto-oncogene product RAF1. Activated by RASSF1 which acts by preventing its dephosphorylation. When autophosphorylated at Thr-180, recruits STRIPAK complex and promotes PP2A-mediated dephosphorylation and inactivation of STK3. Functionally, stress-activated, pro-apoptotic kinase which, following caspase-cleavage, enters the nucleus and induces chromatin condensation followed by internucleosomal DNA fragmentation. Key component of the Hippo signaling pathway which plays a pivotal role in organ size control and tumor suppression by restricting proliferation and promoting apoptosis. The core of this pathway is composed of a kinase cascade wherein STK3/MST2 and STK4/MST1, in complex with its regulatory protein SAV1, phosphorylates and activates LATS1/2 in complex with its regulatory protein MOB1, which in turn phosphorylates and inactivates YAP1 oncoprotein and WWTR1/TAZ. Phosphorylation of YAP1 by LATS2 inhibits its translocation into the nucleus to regulate cellular genes important for cell proliferation, cell death, and cell migration. STK3/MST2 and STK4/MST1 are required to repress proliferation of mature hepatocytes, to prevent activation of facultative adult liver stem cells (oval cells), and to inhibit tumor formation. Phosphorylates NKX2-1. Phosphorylates NEK2 and plays a role in centrosome disjunction by regulating the localization of NEK2 to centrosomes, and its ability to phosphorylate CROCC and CEP250. In conjunction with SAV1, activates the transcriptional activity of ESR1 through the modulation of its phosphorylation. Positively regulates RAF1 activation via suppression of the inhibitory phosphorylation of RAF1 on 'Ser-259'. Phosphorylates MOBKL1A and RASSF2. Phosphorylates MOBKL1B on 'Thr-74'. Acts cooperatively with MOBKL1B to activate STK38. The sequence is that of Serine/threonine-protein kinase 3 (Stk3) from Mus musculus (Mouse).